A 152-amino-acid chain; its full sequence is Glycine cleavage system H protein, mitochondrial (152 aa).

A mitochondrion-targeting transit peptide spans 1–31; sequence MALRMWASSTANALRLSSATRPHYSPLSRCF. In terms of domain architecture, Lipoyl-binding spans 53-135; the sequence is VATVGITDHA…YEDGWMIKVK (83 aa). Lys94 is subject to N6-lipoyllysine.

The protein belongs to the GcvH family. In terms of assembly, the glycine cleavage system is composed of four proteins: P, T, L and H. (R)-lipoate serves as cofactor.

It localises to the mitochondrion. Its function is as follows. The glycine cleavage system catalyzes the degradation of glycine. The H protein shuttles the methylamine group of glycine from the P protein to the T protein. The polypeptide is Glycine cleavage system H protein, mitochondrial (GDCSH) (Flaveria pubescens (Yellowtops)).